Consider the following 252-residue polypeptide: Phosphosulfolactate synthase (252 aa).

Belongs to the phosphosulfolactate synthase family.

It carries out the reaction (2R)-O-phospho-3-sulfolactate = phosphoenolpyruvate + sulfite + H(+). Its function is as follows. Catalyzes the addition of sulfite to phosphoenolpyruvate (PEP) to yield (2R)-phospho-3-sulfolactate (PSL). Is probably involved in the biosynthesis of L-sulfolactate, which is a major constituent of sporulating cells and mature spores. The sequence is that of Phosphosulfolactate synthase (yitD) from Bacillus subtilis (strain 168).